The chain runs to 162 residues: Translocator protein 2 (162 aa).

A run of 5 helical transmembrane segments spans residues 3–23 (LQGP…CMLI), 44–64 (VILL…YLVW), 79–99 (LGLY…FLAA), 103–123 (GLAL…VFIW), and 129–149 (LAAL…AITY).

It belongs to the TspO/BZRP family. As to quaternary structure, homotetramer. May also form homodimer. As to expression, expressed in liver, bone marrow and spleen. In spleen, detected in red pulp but not in white pulp.

The protein resides in the endoplasmic reticulum membrane. It is found in the cell membrane. Functionally, cholesterol-binding protein involved in the redistribution of cholesterol from lipid droplets to the endoplasmic reticulum. Required to meet cholesterol demands during erythropoietic differentiation. May play a role in transport processes at the plasma membrane of erythrocytes, including regulating VDAC-mediated ATP export, and import of the heme precursors protoporphyrin IX and 5-aminolevulinic acid. This chain is Translocator protein 2 (Tspo2), found in Mus musculus (Mouse).